A 476-amino-acid chain; its full sequence is Ribulose bisphosphate carboxylase large chain (476 aa).

Substrate contacts are provided by N124 and T174. K176 serves as the catalytic Proton acceptor. K178 is a binding site for substrate. The Mg(2+) site is built by K202, D204, and E205. An N6-carboxylysine modification is found at K202. The active-site Proton acceptor is H295. Residues R296, H328, and S380 each coordinate substrate.

It belongs to the RuBisCO large chain family. Type I subfamily. Heterohexadecamer of 8 large chains and 8 small chains; disulfide-linked. The disulfide link is formed within the large subunit homodimers. Mg(2+) serves as cofactor. Post-translationally, the disulfide bond which can form in the large chain dimeric partners within the hexadecamer appears to be associated with oxidative stress and protein turnover.

The protein resides in the carboxysome. It carries out the reaction 2 (2R)-3-phosphoglycerate + 2 H(+) = D-ribulose 1,5-bisphosphate + CO2 + H2O. The enzyme catalyses D-ribulose 1,5-bisphosphate + O2 = 2-phosphoglycolate + (2R)-3-phosphoglycerate + 2 H(+). Its function is as follows. RuBisCO catalyzes two reactions: the carboxylation of D-ribulose 1,5-bisphosphate, the primary event in carbon dioxide fixation, as well as the oxidative fragmentation of the pentose substrate in the photorespiration process. Both reactions occur simultaneously and in competition at the same active site. This is Ribulose bisphosphate carboxylase large chain from Trichormus variabilis (strain ATCC 29413 / PCC 7937) (Anabaena variabilis).